We begin with the raw amino-acid sequence, 677 residues long: Epithelial splicing regulatory protein 1 (677 aa).

RRM domains follow at residues 225 to 302 (TVVR…KATG), 326 to 406 (VIVR…RSTA), and 445 to 525 (DCVR…QCSA). Ser543 is subject to Phosphoserine. Position 578 is an omega-N-methylarginine (Arg578).

The protein belongs to the ESRP family.

It localises to the nucleus. In terms of biological role, mRNA splicing factor that regulates the formation of epithelial cell-specific isoforms. Specifically regulates the expression of FGFR2-IIIb, an epithelial cell-specific isoform of FGFR2. Also regulates the splicing of CD44, CTNND1, ENAH, 3 transcripts that undergo changes in splicing during the epithelial-to-mesenchymal transition (EMT). Acts by directly binding specific sequences in mRNAs. Binds the GU-rich sequence motifs in the ISE/ISS-3, a cis-element regulatory region present in the mRNA of FGFR2. Regulates splicing and expression of genes involved in inner ear development, auditory hair cell differentiation, and cell fate specification in the cochlear epithelium. The chain is Epithelial splicing regulatory protein 1 (Esrp1) from Rattus norvegicus (Rat).